The following is a 901-amino-acid chain: Protein translocase subunit SecA (901 aa).

ATP-binding positions include Gln87, 105–109 (GEGKT), and Asp512. Residues Cys885, Cys887, Cys896, and His897 each contribute to the Zn(2+) site.

This sequence belongs to the SecA family. Monomer and homodimer. Part of the essential Sec protein translocation apparatus which comprises SecA, SecYEG and auxiliary proteins SecDF-YajC and YidC. The cofactor is Zn(2+).

It localises to the cell inner membrane. The protein localises to the cytoplasm. The enzyme catalyses ATP + H2O + cellular proteinSide 1 = ADP + phosphate + cellular proteinSide 2.. Its function is as follows. Part of the Sec protein translocase complex. Interacts with the SecYEG preprotein conducting channel. Has a central role in coupling the hydrolysis of ATP to the transfer of proteins into and across the cell membrane, serving both as a receptor for the preprotein-SecB complex and as an ATP-driven molecular motor driving the stepwise translocation of polypeptide chains across the membrane. This Salmonella paratyphi A (strain ATCC 9150 / SARB42) protein is Protein translocase subunit SecA.